The chain runs to 186 residues: Threonylcarbamoyl-AMP synthase (186 aa).

A YrdC-like domain is found at 1–186 (MADTWEAAHS…LNNQVFRDDA (186 aa)).

The protein belongs to the SUA5 family. TsaC subfamily.

The protein localises to the cytoplasm. It carries out the reaction L-threonine + hydrogencarbonate + ATP = L-threonylcarbamoyladenylate + diphosphate + H2O. In terms of biological role, required for the formation of a threonylcarbamoyl group on adenosine at position 37 (t(6)A37) in tRNAs that read codons beginning with adenine. Catalyzes the conversion of L-threonine, HCO(3)(-)/CO(2) and ATP to give threonylcarbamoyl-AMP (TC-AMP) as the acyladenylate intermediate, with the release of diphosphate. The polypeptide is Threonylcarbamoyl-AMP synthase (Idiomarina loihiensis (strain ATCC BAA-735 / DSM 15497 / L2-TR)).